Reading from the N-terminus, the 467-residue chain is MEKNTIILAAGQGTRMKSKLYKVLHQVCGKAMVDHMLTQVEKTNMDHIVTIVGHGAEKVRELLGDRTEYAIQEQQLGTGHAVLQAEKILGDKDGMTMIVSGDTPLFTAKTFENLFEYHRQKGAAATILTARTENPFSYGRIVRNEVGVVSKIVEQKDATTEEAEIKEINTGVYCFDNQKLFAALHQVKNDNAQGEYYLPDVIGIMKDAGEIVAAYEMADFSESMGVNDRLALSKATKVMQRRINEEHMVNGVTIIDPENTYIDYGVEIGPDTIIEPGVQIQGNTKIGSSSVIGAHSKIVDSTIGNRVTVTSSQIESAIMHDDSNIGPHSHLRPQAEIGEFAHVGNYCEVKNAKLGARTKMGHLSYVGDADLGTDINIGCGVVFVNYDGMNKHHSTVGDYAFIGSNSNIVAPVTIADHSYVAAGSTITNDVNKFEMGIARGRQVNKEGYFKKLPVYDAALKAEEENNK.

A pyrophosphorylase region spans residues 1 to 229 (MEKNTIILAA…FSESMGVNDR (229 aa)). Residues 8-11 (LAAG), K22, Q72, 77-78 (GT), 100-102 (SGD), G139, E154, N169, and N227 contribute to the UDP-N-acetyl-alpha-D-glucosamine site. Residue D102 participates in Mg(2+) binding. N227 contacts Mg(2+). The linker stretch occupies residues 230–250 (LALSKATKVMQRRINEEHMVN). The tract at residues 251 to 467 (GVTIIDPENT…ALKAEEENNK (217 aa)) is N-acetyltransferase. UDP-N-acetyl-alpha-D-glucosamine is bound by residues R332 and K350. The active-site Proton acceptor is H362. Residues Y365 and N376 each contribute to the UDP-N-acetyl-alpha-D-glucosamine site. Acetyl-CoA contacts are provided by residues 385–386 (NY), S404, A422, and R439.

This sequence in the N-terminal section; belongs to the N-acetylglucosamine-1-phosphate uridyltransferase family. The protein in the C-terminal section; belongs to the transferase hexapeptide repeat family. In terms of assembly, homotrimer. Requires Mg(2+) as cofactor.

The protein localises to the cytoplasm. It carries out the reaction alpha-D-glucosamine 1-phosphate + acetyl-CoA = N-acetyl-alpha-D-glucosamine 1-phosphate + CoA + H(+). The enzyme catalyses N-acetyl-alpha-D-glucosamine 1-phosphate + UTP + H(+) = UDP-N-acetyl-alpha-D-glucosamine + diphosphate. Its pathway is nucleotide-sugar biosynthesis; UDP-N-acetyl-alpha-D-glucosamine biosynthesis; N-acetyl-alpha-D-glucosamine 1-phosphate from alpha-D-glucosamine 6-phosphate (route II): step 2/2. It functions in the pathway nucleotide-sugar biosynthesis; UDP-N-acetyl-alpha-D-glucosamine biosynthesis; UDP-N-acetyl-alpha-D-glucosamine from N-acetyl-alpha-D-glucosamine 1-phosphate: step 1/1. It participates in bacterial outer membrane biogenesis; LPS lipid A biosynthesis. Functionally, catalyzes the last two sequential reactions in the de novo biosynthetic pathway for UDP-N-acetylglucosamine (UDP-GlcNAc). The C-terminal domain catalyzes the transfer of acetyl group from acetyl coenzyme A to glucosamine-1-phosphate (GlcN-1-P) to produce N-acetylglucosamine-1-phosphate (GlcNAc-1-P), which is converted into UDP-GlcNAc by the transfer of uridine 5-monophosphate (from uridine 5-triphosphate), a reaction catalyzed by the N-terminal domain. The chain is Bifunctional protein GlmU from Pediococcus pentosaceus (strain ATCC 25745 / CCUG 21536 / LMG 10740 / 183-1w).